The following is a 1269-amino-acid chain: Protein strawberry notch homolog 1 (1269 aa).

The segment at 21 to 47 (NDLFDVDGGDAGLATPTPPSVQQQQPP) is disordered. Lys-113 is subject to N6-acetyllysine. Phosphoserine is present on residues Ser-126 and Ser-178. At Lys-377 the chain carries N6-acetyllysine. The segment at 652–725 (PSNNSSPRDS…SLITSQDAVE (74 aa)) is disordered. Phosphoserine is present on residues Ser-656, Ser-657, and Ser-661. The span at 679 to 693 (SGSESDVSDNEESDY) shows a compositional bias: acidic residues. Residues Ser-700 and Ser-701 each carry the phosphoserine modification. The stretch at 719-746 (TSQDAVERAQQMKKDLLDKLEKLAEDLP) forms a coiled coil. Position 1098 is an N6-acetyllysine (Lys-1098). At Ser-1262 the chain carries Phosphoserine.

Belongs to the SBNO family.

It localises to the nucleus. In terms of biological role, plays a crucial role in the regulation of neural stem cells (NSCs) proliferation. Enhances the phosphorylation of GSK3B through the PI3K-Akt signaling pathway, thereby upregulating the Wnt/beta-catenin signaling pathway and promoting the proliferation of NSCs. Improves ischemic stroke recovery while inhibiting neuroinflammation through small extracellular vesicles (sEVs)-mediated mechanism. Enhances the secretion of sEVs from NSCs, which in turn inhibit both the MAPK and NF-kappaB pathways in microglia. This inhibition suppresses the pro-inflammatory M1 polarization of microglia, promoting a shift towards the M2 anti-inflammatory phenotype, which is beneficial for reducing neuroinflammation. This is Protein strawberry notch homolog 1 (Sbno1) from Rattus norvegicus (Rat).